Reading from the N-terminus, the 208-residue chain is FMN-dependent NADH:quinone oxidoreductase 1 (208 aa).

17 to 19 (SVS) contacts FMN.

It belongs to the azoreductase type 1 family. As to quaternary structure, homodimer. The cofactor is FMN.

It catalyses the reaction 2 a quinone + NADH + H(+) = 2 a 1,4-benzosemiquinone + NAD(+). It carries out the reaction N,N-dimethyl-1,4-phenylenediamine + anthranilate + 2 NAD(+) = 2-(4-dimethylaminophenyl)diazenylbenzoate + 2 NADH + 2 H(+). In terms of biological role, quinone reductase that provides resistance to thiol-specific stress caused by electrophilic quinones. Its function is as follows. Also exhibits azoreductase activity. Catalyzes the reductive cleavage of the azo bond in aromatic azo compounds to the corresponding amines. The protein is FMN-dependent NADH:quinone oxidoreductase 1 of Listeria monocytogenes serovar 1/2a (strain ATCC BAA-679 / EGD-e).